A 117-amino-acid polypeptide reads, in one-letter code: Large ribosomal subunit protein bL20c (117 aa).

Belongs to the bacterial ribosomal protein bL20 family.

Its subcellular location is the plastid. It localises to the chloroplast. Its function is as follows. Binds directly to 23S ribosomal RNA and is necessary for the in vitro assembly process of the 50S ribosomal subunit. It is not involved in the protein synthesizing functions of that subunit. This chain is Large ribosomal subunit protein bL20c (rpl20), found in Arabidopsis thaliana (Mouse-ear cress).